The sequence spans 573 residues: 3-oxosteroid 1-dehydrogenase (573 aa).

Residue 7-36 coordinates FAD; it reads DLIVVGSGAGACWAPIRAQEQGLKTLVVEK.

It belongs to the FAD-dependent oxidoreductase 2 family. 3-oxosteroid dehydrogenase subfamily. FAD serves as cofactor.

The protein resides in the cell inner membrane. The enzyme catalyses a 3-oxosteroid + A = a 3-oxo-Delta(1)-steroid + AH2. The protein operates within lipid metabolism; steroid degradation. Dehydrogenates steroids by introducing a double bond in steroid ring A. This is 3-oxosteroid 1-dehydrogenase from Comamonas testosteroni (Pseudomonas testosteroni).